A 453-amino-acid chain; its full sequence is Ribosomal protein uS12 methylthiotransferase RimO (453 aa).

Residues 6–116 (PKVGFVSLGC…VMEAVHEALP (111 aa)) form the MTTase N-terminal domain. Positions 15, 51, 80, 147, 151, and 154 each coordinate [4Fe-4S] cluster. In terms of domain architecture, Radical SAM core spans 133–370 (LTPRHYAYLK…MEKQAQISAA (238 aa)). In terms of domain architecture, TRAM spans 373–441 (EAKIGTVQQC…EHDLYGDALP (69 aa)).

Belongs to the methylthiotransferase family. RimO subfamily. The cofactor is [4Fe-4S] cluster.

The protein resides in the cytoplasm. It carries out the reaction L-aspartate(89)-[ribosomal protein uS12]-hydrogen + (sulfur carrier)-SH + AH2 + 2 S-adenosyl-L-methionine = 3-methylsulfanyl-L-aspartate(89)-[ribosomal protein uS12]-hydrogen + (sulfur carrier)-H + 5'-deoxyadenosine + L-methionine + A + S-adenosyl-L-homocysteine + 2 H(+). Functionally, catalyzes the methylthiolation of an aspartic acid residue of ribosomal protein uS12. This is Ribosomal protein uS12 methylthiotransferase RimO from Stenotrophomonas maltophilia (strain K279a).